Reading from the N-terminus, the 174-residue chain is Endoribonuclease YbeY (174 aa).

Histidine 133, histidine 137, and histidine 143 together coordinate Zn(2+).

It belongs to the endoribonuclease YbeY family. Requires Zn(2+) as cofactor.

Its subcellular location is the cytoplasm. In terms of biological role, single strand-specific metallo-endoribonuclease involved in late-stage 70S ribosome quality control and in maturation of the 3' terminus of the 16S rRNA. The chain is Endoribonuclease YbeY from Paracoccus denitrificans (strain Pd 1222).